Consider the following 269-residue polypeptide: METFNSLFMVSPLLLGVLFFVAMLAGFIDSIAGGGGLLTIPALMAAGMSPANALATNKLQACGGSISATIYFIRRKVVSLSDQKLNIAMTFVGSMSGALLVQYVQADVLRQILPILVICIGLYFLLMPKLGEEDRQRRMYGLPFALIAGGCVGFYDGFFGPAAGSFYALAFVTLCGFNLAKATAHAKLLNATSNIGGLLLFILGGKVIWATGFVMLVGQFLGARMGSRLVLSKGQKLIRPMIVIVSAVMSAKLLYDSHGQEILHWLGMN.

Over 1–7 (METFNSL) the chain is Periplasmic. The helical transmembrane segment at 8 to 28 (FMVSPLLLGVLFFVAMLAGFI) threads the bilayer. The Cytoplasmic portion of the chain corresponds to 29-30 (DS). Residues 31–51 (IAGGGGLLTIPALMAAGMSPA) form a helical membrane-spanning segment. Over 52–84 (NALATNKLQACGGSISATIYFIRRKVVSLSDQK) the chain is Periplasmic. A helical membrane pass occupies residues 85–105 (LNIAMTFVGSMSGALLVQYVQ). The Cytoplasmic portion of the chain corresponds to 106–111 (ADVLRQ). Residues 112 to 132 (ILPILVICIGLYFLLMPKLGE) traverse the membrane as a helical segment. The Periplasmic segment spans residues 133–156 (EDRQRRMYGLPFALIAGGCVGFYD). Residues 157-177 (GFFGPAAGSFYALAFVTLCGF) traverse the membrane as a helical segment. Residues 178 to 197 (NLAKATAHAKLLNATSNIGG) lie on the Cytoplasmic side of the membrane. Residues 198–218 (LLLFILGGKVIWATGFVMLVG) traverse the membrane as a helical segment. Over 219 to 269 (QFLGARMGSRLVLSKGQKLIRPMIVIVSAVMSAKLLYDSHGQEILHWLGMN) the chain is Periplasmic.

It belongs to the 4-toluene sulfonate uptake permease (TSUP) (TC 2.A.102) family.

It localises to the cell inner membrane. This is Probable membrane transporter protein YfcA (yfcA) from Escherichia coli O157:H7.